Consider the following 230-residue polypeptide: Vacuole-localized protein 4 (230 aa).

Positions 1-19 (MRVSSAIFTIASGIAAVSA) are cleaved as a signal peptide.

The protein resides in the vacuole. Functionally, vacuolar protein required for aerial conidiation and conidial maturation. Also involved in blastospore production and cell cycle. Plays a vital role in the secretion of Pr1 proteases for cuticular penetration and hence contributes significantly to host infection and virulence. The protein is Vacuole-localized protein 4 of Beauveria bassiana (strain ARSEF 2860) (White muscardine disease fungus).